The following is a 940-amino-acid chain: Translation initiation factor IF-2 (940 aa).

2 stretches are compositionally biased toward low complexity: residues 138–147 (APVEVVAEPE) and 161–208 (PVVV…ITEL). The disordered stretch occupies residues 138–354 (APVEVVAEPE…DRQTFQAPTE (217 aa)). Basic and acidic residues-rich tracts occupy residues 214 to 271 (IAAR…EEAA) and 289 to 311 (AKAD…DGAK). Positions 440-609 (PRAPVVTVMG…LLQAEVLELT (170 aa)) constitute a tr-type G domain. The G1 stretch occupies residues 449 to 456 (GHVDHGKT). 449–456 (GHVDHGKT) is a GTP binding site. A G2 region spans residues 474-478 (GITQH). A G3 region spans residues 495-498 (DTPG). GTP contacts are provided by residues 495–499 (DTPGH) and 549–552 (TKID). The segment at 549-552 (TKID) is G4. Residues 585 to 587 (SAK) are G5.

The protein belongs to the TRAFAC class translation factor GTPase superfamily. Classic translation factor GTPase family. IF-2 subfamily.

The protein resides in the cytoplasm. One of the essential components for the initiation of protein synthesis. Protects formylmethionyl-tRNA from spontaneous hydrolysis and promotes its binding to the 30S ribosomal subunits. Also involved in the hydrolysis of GTP during the formation of the 70S ribosomal complex. This chain is Translation initiation factor IF-2, found in Azoarcus sp. (strain BH72).